The sequence spans 458 residues: Opine oxidase subunit A (458 aa).

This sequence to T-protein and to dimethylglycine dehydrogenase. Heterodimer of a subunit A and a subunit B.

It functions in the pathway opine metabolism; octopine degradation. In terms of biological role, oxidative cleavage of octopine into L-arginine and pyruvate. This Rhizobium meliloti (strain 1021) (Ensifer meliloti) protein is Opine oxidase subunit A (ooxA).